The chain runs to 317 residues: MNMLEETLETIKAYVALTKPRVIELLLVATIPAMLQAERGENNIGLILLTLLGGWMGAAAANTFNMVADSDIDQKMGRTRARPLVRNKVSNRHASVFAWTLTVVSFLWLWVLCRSVLAGLFILLTIFFYIFVYTKYLKRKTHLNIVWGGAAGCMPVVVGWAVITDNLPAGTPAQWWQAIVLFMVIFFWTPPHTWALAMKYKDDYARAGVPMLPVVRTPVEVTRQIVWYTVATVLTTFLLIPAASWIHAIIAVVSGVWFLVMAVRLHNGIKNGGEVKPLKLFILSNNYLAVYFVGLSIDAVLGWETIGGHLGWTTTFF.

The next 8 helical transmembrane spans lie at 44-64, 93-113, 116-136, 143-163, 178-198, 221-241, 243-263, and 288-308; these read IGLILLTLLGGWMGAAAANTF, HASVFAWTLTVVSFLWLWVLC, VLAGLFILLTIFFYIFVYTKY, LNIVWGGAAGCMPVVVGWAVI, AIVLFMVIFFWTPPHTWALAM, VTRQIVWYTVATVLTTFLLIP, ASWIHAIIAVVSGVWFLVMAV, and LAVYFVGLSIDAVLGWETIGG.

Belongs to the UbiA prenyltransferase family. Protoheme IX farnesyltransferase subfamily.

It is found in the cell membrane. It catalyses the reaction heme b + (2E,6E)-farnesyl diphosphate + H2O = Fe(II)-heme o + diphosphate. The protein operates within porphyrin-containing compound metabolism; heme O biosynthesis; heme O from protoheme: step 1/1. Its function is as follows. Converts heme B (protoheme IX) to heme O by substitution of the vinyl group on carbon 2 of heme B porphyrin ring with a hydroxyethyl farnesyl side group. In Corynebacterium diphtheriae (strain ATCC 700971 / NCTC 13129 / Biotype gravis), this protein is Protoheme IX farnesyltransferase.